The following is a 409-amino-acid chain: uncharacterized protein (409 aa).

The next 10 membrane-spanning stretches (helical) occupy residues 22 to 42, 58 to 78, 99 to 119, 174 to 194, 217 to 237, 266 to 286, 293 to 312, 316 to 338, 353 to 373, and 378 to 398; these read ILII…VIPA, LGII…VVGW, GILG…VFFI, FGAV…MYIA, NTAI…LIFA, SYIF…GPLA, FVIL…LPFA, LAYG…TVVY, LTVG…GALI, and LTPT…AFLL.

The protein belongs to the major facilitator superfamily.

Its subcellular location is the cell membrane. This is an uncharacterized protein from Bacillus subtilis (strain 168).